The following is a 492-amino-acid chain: Phosphatidylglycerol--prolipoprotein diacylglyceryl transferase (492 aa).

9 helical membrane-spanning segments follow: residues Ile40–Trp60, Ala72–Pro92, Val106–Ala126, Ala133–Leu153, Gln184–Leu204, Ile214–Leu234, Val361–Ile381, Gly409–Ile429, and Leu441–Ile461. Residue Arg230 participates in a 1,2-diacyl-sn-glycero-3-phospho-(1'-sn-glycerol) binding.

Belongs to the Lgt family.

The protein resides in the cell inner membrane. It carries out the reaction L-cysteinyl-[prolipoprotein] + a 1,2-diacyl-sn-glycero-3-phospho-(1'-sn-glycerol) = an S-1,2-diacyl-sn-glyceryl-L-cysteinyl-[prolipoprotein] + sn-glycerol 1-phosphate + H(+). It participates in protein modification; lipoprotein biosynthesis (diacylglyceryl transfer). In terms of biological role, catalyzes the transfer of the diacylglyceryl group from phosphatidylglycerol to the sulfhydryl group of the N-terminal cysteine of a prolipoprotein, the first step in the formation of mature lipoproteins. This Rhodopirellula baltica (strain DSM 10527 / NCIMB 13988 / SH1) protein is Phosphatidylglycerol--prolipoprotein diacylglyceryl transferase.